Reading from the N-terminus, the 510-residue chain is GMP synthase [glutamine-hydrolyzing] (510 aa).

The Glutamine amidotransferase type-1 domain maps to 5–195 (LVLVVDFGGQ…LFNVCNLKGD (191 aa)). Cysteine 82 functions as the Nucleophile in the catalytic mechanism. Catalysis depends on residues histidine 169 and glutamate 171. Residues 196–385 (WSMSSFAEQQ…LGIPHKLVWR (190 aa)) enclose the GMPS ATP-PPase domain. ATP is bound at residue 223 to 229 (SGGVDSS).

In terms of assembly, homodimer.

The enzyme catalyses XMP + L-glutamine + ATP + H2O = GMP + L-glutamate + AMP + diphosphate + 2 H(+). It participates in purine metabolism; GMP biosynthesis; GMP from XMP (L-Gln route): step 1/1. Functionally, catalyzes the synthesis of GMP from XMP. The protein is GMP synthase [glutamine-hydrolyzing] of Clostridium botulinum (strain Kyoto / Type A2).